Here is a 180-residue protein sequence, read N- to C-terminus: Ribulose bisphosphate carboxylase small subunit, chloroplastic 2 (180 aa).

The N-terminal 56 residues, 1-56 (MASMISSSAVTTVSRASRGQSAAVAPFGGLKSMTGFPVKKVNTDITSITSNGGRVK), are a transit peptide targeting the chloroplast.

It belongs to the RuBisCO small chain family. As to quaternary structure, heterohexadecamer of 8 large and 8 small subunits.

The protein localises to the plastid. Its subcellular location is the chloroplast. Its function is as follows. RuBisCO catalyzes two reactions: the carboxylation of D-ribulose 1,5-bisphosphate, the primary event in carbon dioxide fixation, as well as the oxidative fragmentation of the pentose substrate. Both reactions occur simultaneously and in competition at the same active site. Although the small subunit is not catalytic it is essential for maximal activity. The sequence is that of Ribulose bisphosphate carboxylase small subunit, chloroplastic 2 from Pisum sativum (Garden pea).